The sequence spans 366 residues: MAHKLLNDTFLRALLRQPTDYTPIWLMRQAGRYLPEYNATRARAGSFLGLAKNPAFATEVTLQPLERYPLDAAILFSDILTVPDAMGLGLEFVTGEGPKFARPVRTEDDVARLAVPDIDATLRYVTDAVREIRTALTDAQGRQRVPLIGFSGSPWTLACYMVEGGGSADFRTVKSMLYARPDLMHRILDVNARAVAAYLNAQIEAGAQAVMIFDTWGGALADGVYQRFSLHYIQQVVSQLKRDHDGEKVPVITFTKGGGLWLDEIAETGVDAVGLDWTVNLSKARERVGGKVALQGNIDPSVLFAPPAAIRMEARAVLDSFGNHPGHVFNLGHGISQFTPPEHVAELVDEVHRHSRAIRSGAHAPA.

Residues 28–32 (RQAGR), Asp-78, Tyr-160, Thr-215, and His-333 contribute to the substrate site.

The protein belongs to the uroporphyrinogen decarboxylase family. In terms of assembly, homodimer.

The protein resides in the cytoplasm. The catalysed reaction is uroporphyrinogen III + 4 H(+) = coproporphyrinogen III + 4 CO2. The protein operates within porphyrin-containing compound metabolism; protoporphyrin-IX biosynthesis; coproporphyrinogen-III from 5-aminolevulinate: step 4/4. Functionally, catalyzes the decarboxylation of four acetate groups of uroporphyrinogen-III to yield coproporphyrinogen-III. This is Uroporphyrinogen decarboxylase from Paraburkholderia xenovorans (strain LB400).